The following is a 120-amino-acid chain: Large ribosomal subunit protein uL18 (120 aa).

The protein belongs to the universal ribosomal protein uL18 family. As to quaternary structure, part of the 50S ribosomal subunit; part of the 5S rRNA/L5/L18/L25 subcomplex. Contacts the 5S and 23S rRNAs.

Its function is as follows. This is one of the proteins that bind and probably mediate the attachment of the 5S RNA into the large ribosomal subunit, where it forms part of the central protuberance. This Rhodospirillum rubrum (strain ATCC 11170 / ATH 1.1.1 / DSM 467 / LMG 4362 / NCIMB 8255 / S1) protein is Large ribosomal subunit protein uL18.